Reading from the N-terminus, the 192-residue chain is Spermatogenesis-associated protein 3 (192 aa).

Basic residues predominate over residues Met1–Arg15. 2 disordered regions span residues Met1 to Arg65 and Ser161 to Gly184. Residues Ser19–Ser59 show a composition bias toward low complexity.

It localises to the cell projection. It is found in the cilium. Its subcellular location is the flagellum. The protein is Spermatogenesis-associated protein 3 (SPATA3) of Homo sapiens (Human).